The sequence spans 718 residues: MASSAAQIHILGGIGFPTSSSSSSTKNLDNKTNSIPRSVFFGNRTSPFTTPTSAFLRMGRRNNNASRYTVGPVRVVNEKVVGIDLGTTNSAVAAMEGGKPTIVTNAEGQRTTPSVVAYTKSKDRLVGQIAKRQAVVNPENTFFSVKRFIGRRMNEVAEESKQVSYRVIKDENGNVKLDCPAIGKQFAAEEISAQVLRKLVDDASRFLNDKVTKAVITVPAYFNDSQRTATKDAGRIAGLEVLRIINEPTAASLAYGFERKSNETILVFDLGGGTFDVSVLEVGDGVFEVLSTSGDTHLGGDDFDKRVVDWLASTFKKDEGIDLLKDKQALQRLTEAAEKAKIELSSLTQTNMSLPFITATADGPKHIETTLTRGKFEELCSDLLDRVRTPVENSLRDAKLSFKDIDEVILVGGSTRIPAVQDLVRKLTGKEPNVSVNPDEVVALGAAVQAGVLSGDVSDIVLLDVTPLSLGLETLGGVMTKIIPRNTTLPTSKSEVFSTAADGQTSVEINVLQGEREFVRDNKSIGSFRLDGIPPAPRGVPQIEVKFDIDANGILSVSASDKGTGKKQDITITGASTLPKDEVDTMVQEAERFAKEDKEKRDAIDTKNQADSVVYQTEKQLKELGEKIPGPVKEKVEAKLQELKEKIASGSTQEIKDTMAALNQEVMQIGQSLYNQPQPGGADSPPGGEASSSSDTSSSAKGGDNGGDVIDADFTDSN.

Residues 1 to 92 (MASSAAQIHI…IDLGTTNSAV (92 aa)) constitute a chloroplast transit peptide. Residues 668-678 (QIGQSLYNQPQ) are compositionally biased toward polar residues. The interval 668–718 (QIGQSLYNQPQPGGADSPPGGEASSSSDTSSSAKGGDNGGDVIDADFTDSN) is disordered.

This sequence belongs to the heat shock protein 70 (TC 1.A.33) family. DnaK subfamily.

The protein localises to the plastid. The protein resides in the chloroplast stroma. Acts redundantly with HSP70-6 in the thermotolerance of germinating seeds. Plays an important role in the protein precursor import into chloroplasts. In terms of biological role, in cooperation with other chaperones, Hsp70s are key components that facilitate folding of de novo synthesized proteins, assist translocation of precursor proteins into organelles, and are responsible for degradation of damaged protein under stress conditions. This chain is Heat shock 70 kDa protein 7, chloroplastic (HSP70-7), found in Arabidopsis thaliana (Mouse-ear cress).